The sequence spans 458 residues: ATP synthase subunit beta (458 aa).

ATP is bound at residue 148–155; it reads GGAGVGKT.

It belongs to the ATPase alpha/beta chains family. In terms of assembly, F-type ATPases have 2 components, CF(1) - the catalytic core - and CF(0) - the membrane proton channel. CF(1) has five subunits: alpha(3), beta(3), gamma(1), delta(1), epsilon(1). CF(0) has three main subunits: a(1), b(2) and c(9-12). The alpha and beta chains form an alternating ring which encloses part of the gamma chain. CF(1) is attached to CF(0) by a central stalk formed by the gamma and epsilon chains, while a peripheral stalk is formed by the delta and b chains.

It localises to the cell inner membrane. The enzyme catalyses ATP + H2O + 4 H(+)(in) = ADP + phosphate + 5 H(+)(out). In terms of biological role, produces ATP from ADP in the presence of a proton gradient across the membrane. The catalytic sites are hosted primarily by the beta subunits. The sequence is that of ATP synthase subunit beta from Francisella tularensis subsp. novicida (strain U112).